The sequence spans 489 residues: Acetyl-coenzyme A carboxylase carboxyl transferase subunit beta, chloroplastic (489 aa).

Residues 225-489 (LWIQCDNCYG…FFPLNKTEIK (265 aa)) form the CoA carboxyltransferase N-terminal domain. Cys-229, Cys-232, Cys-245, and Cys-248 together coordinate Zn(2+). Residues 229–248 (CDNCYGLMYKKVEMNVCEEC) form a C4-type zinc finger.

The protein belongs to the AccD/PCCB family. Acetyl-CoA carboxylase is a heterohexamer composed of biotin carboxyl carrier protein, biotin carboxylase and 2 subunits each of ACCase subunit alpha and ACCase plastid-coded subunit beta (accD). Zn(2+) is required as a cofactor.

The protein resides in the plastid. It is found in the chloroplast stroma. It carries out the reaction N(6)-carboxybiotinyl-L-lysyl-[protein] + acetyl-CoA = N(6)-biotinyl-L-lysyl-[protein] + malonyl-CoA. The protein operates within lipid metabolism; malonyl-CoA biosynthesis; malonyl-CoA from acetyl-CoA: step 1/1. Its function is as follows. Component of the acetyl coenzyme A carboxylase (ACC) complex. Biotin carboxylase (BC) catalyzes the carboxylation of biotin on its carrier protein (BCCP) and then the CO(2) group is transferred by the transcarboxylase to acetyl-CoA to form malonyl-CoA. In Draba nemorosa (Woodland whitlowgrass), this protein is Acetyl-coenzyme A carboxylase carboxyl transferase subunit beta, chloroplastic.